The chain runs to 137 residues: Basic phospholipase A2 homolog Bsc-K49 (137 aa).

Positions 1–16 are cleaved as a signal peptide; sequence MRTLWIVAVLLVGVEG. Cystine bridges form between Cys-42–Cys-131, Cys-44–Cys-60, Cys-59–Cys-111, Cys-65–Cys-137, Cys-66–Cys-104, Cys-73–Cys-97, and Cys-91–Cys-102. Residues 121-133 form an important for membrane-damaging activities in eukaryotes and bacteria; heparin-binding region; the sequence is KNYKITMKMFCKK.

This sequence belongs to the phospholipase A2 family. Group II subfamily. K49 sub-subfamily. Homodimer; non-covalently linked. Expressed by the venom gland.

It is found in the secreted. Functionally, snake venom phospholipase A2 that lacks enzymatic activity. Is myotoxic, and displays edema-inducing activities. A model of myotoxic mechanism has been proposed: an apo Lys49-PLA2 is activated by the entrance of a hydrophobic molecule (e.g. fatty acid) at the hydrophobic channel of the protein leading to a reorientation of a monomer. This reorientation causes a transition between 'inactive' to 'active' states, causing alignment of C-terminal and membrane-docking sites (MDoS) side-by-side and putting the membrane-disruption sites (MDiS) in the same plane, exposed to solvent and in a symmetric position for both monomers. The MDoS region stabilizes the toxin on membrane by the interaction of charged residues with phospholipid head groups. Subsequently, the MDiS region destabilizes the membrane with penetration of hydrophobic residues. This insertion causes a disorganization of the membrane, allowing an uncontrolled influx of ions (i.e. calcium and sodium), and eventually triggering irreversible intracellular alterations and cell death. In Bothriechis schlegelii (Eyelash palm pitviper), this protein is Basic phospholipase A2 homolog Bsc-K49.